Here is a 164-residue protein sequence, read N- to C-terminus: 3-isopropylmalate dehydratase small subunit (164 aa).

Belongs to the LeuD family. LeuD type 2 subfamily. Heterodimer of LeuC and LeuD.

It carries out the reaction (2R,3S)-3-isopropylmalate = (2S)-2-isopropylmalate. The protein operates within amino-acid biosynthesis; L-leucine biosynthesis; L-leucine from 3-methyl-2-oxobutanoate: step 2/4. Functionally, catalyzes the isomerization between 2-isopropylmalate and 3-isopropylmalate, via the formation of 2-isopropylmaleate. The polypeptide is 3-isopropylmalate dehydratase small subunit (Lachnospira eligens (strain ATCC 27750 / DSM 3376 / VPI C15-48 / C15-B4) (Eubacterium eligens)).